The sequence spans 523 residues: Probable FAD synthase (523 aa).

Residues 20–111 (AIVVIGDEIL…TDQLHFSDEI (92 aa)) form a molybdenum cofactor biosynthesis protein-like region. The interval 332-489 (QIALSFNGGK…SLGGRDNTVK (158 aa)) is FAD synthase.

It in the N-terminal section; belongs to the MoaB/Mog family. This sequence in the C-terminal section; belongs to the PAPS reductase family. FAD1 subfamily. It depends on Mg(2+) as a cofactor.

The catalysed reaction is FMN + ATP + H(+) = FAD + diphosphate. It functions in the pathway cofactor biosynthesis; FAD biosynthesis; FAD from FMN: step 1/1. Catalyzes the adenylation of flavin mononucleotide (FMN) to form flavin adenine dinucleotide (FAD) coenzyme. This is Probable FAD synthase from Caenorhabditis briggsae.